A 136-amino-acid chain; its full sequence is Small ribosomal subunit protein uS8 (136 aa).

The protein belongs to the universal ribosomal protein uS8 family. As to quaternary structure, part of the 30S ribosomal subunit. Contacts proteins S5 and S12.

Functionally, one of the primary rRNA binding proteins, it binds directly to 16S rRNA central domain where it helps coordinate assembly of the platform of the 30S subunit. This Synechococcus sp. (strain JA-2-3B'a(2-13)) (Cyanobacteria bacterium Yellowstone B-Prime) protein is Small ribosomal subunit protein uS8.